The chain runs to 264 residues: Thiazole synthase (264 aa).

Lysine 106 (schiff-base intermediate with DXP) is an active-site residue. 1-deoxy-D-xylulose 5-phosphate contacts are provided by residues glycine 167, alanine 193 to glycine 194, and asparagine 215 to threonine 216.

It belongs to the ThiG family. As to quaternary structure, homotetramer. Forms heterodimers with either ThiH or ThiS.

The protein resides in the cytoplasm. It carries out the reaction [ThiS sulfur-carrier protein]-C-terminal-Gly-aminoethanethioate + 2-iminoacetate + 1-deoxy-D-xylulose 5-phosphate = [ThiS sulfur-carrier protein]-C-terminal Gly-Gly + 2-[(2R,5Z)-2-carboxy-4-methylthiazol-5(2H)-ylidene]ethyl phosphate + 2 H2O + H(+). Its pathway is cofactor biosynthesis; thiamine diphosphate biosynthesis. In terms of biological role, catalyzes the rearrangement of 1-deoxy-D-xylulose 5-phosphate (DXP) to produce the thiazole phosphate moiety of thiamine. Sulfur is provided by the thiocarboxylate moiety of the carrier protein ThiS. In vitro, sulfur can be provided by H(2)S. The polypeptide is Thiazole synthase (Stenotrophomonas maltophilia (strain K279a)).